Reading from the N-terminus, the 473-residue chain is O-methyltransferase ARMGADRAFT_1088206 (473 aa).

Residues 276-277 (AG), Asp299, 330-331 (DM), and Arg348 contribute to the S-adenosyl-L-methionine site. Catalysis depends on His352, which acts as the Proton acceptor.

The protein belongs to the class I-like SAM-binding methyltransferase superfamily. Cation-independent O-methyltransferase family.

It participates in secondary metabolite biosynthesis. Its function is as follows. O-methyltransferase, part of the gene cluster that mediates the biosynthesis of melleolides, a range of antifungal and phytotoxic polyketide derivatives composed of an orsellinic acid (OA) moiety esterified to various sesquiterpene alcohols. The first step in melleolides biosynthesis is performed by the delta(6)-protoilludene synthase PRO1 which catalyzes the cyclization of farnesyl diphosphate to protoilludene. The orsellinic acid synthase armB produces OA by condensing acetyl-CoA with 3 malonyl-CoA units in a three-round chain elongation reaction folowed by a C2-C7 ring closure. ArmB further catalyzes the trans-esterification of OA to the various sesquiterpene alcohols resulting from the hydroxylation of protoilludene. The melleolides cluster also includes 5 cytochrome P450 monooxygenases, 4 NAD(+)-dependent oxidoreductases, one flavin-dependent oxidoreductase, and one O-methyltransferase. The cytochrome P450 monooxygenases may be involved in protoilludene hydroxylation to elaborate melleolides with multiple alcohol groups, such as melleolide D, which carries alcohol functionalities at C-4, C-5, C-10, and C-13. The role of the NAD(+)-dependent enzymes remains unknown. Numerous melleolides, including arnamial, show 5'-O-methylation of the aromatic moiety which may be catalyzed by the methyltransferase encoded in the cluster. The flavin-dependent oxidoreductase might represent the dehydrogenase yielding the aldehyde in position 1 of arnamial and other melleolides. Finally, several halogenase localized outside of the cluster, are able to catalyze the transfer of a single chlorine atom to the melleolide backbone, resulting in a 6'-chloromelleolide product. The chain is O-methyltransferase ARMGADRAFT_1088206 from Armillaria gallica (Bulbous honey fungus).